A 362-amino-acid polypeptide reads, in one-letter code: UDP-N-acetylglucosamine--N-acetylmuramyl-(pentapeptide) pyrophosphoryl-undecaprenol N-acetylglucosamine transferase (362 aa).

UDP-N-acetyl-alpha-D-glucosamine-binding positions include 21-23, Asn-129, Arg-170, Ser-198, and Gln-290; that span reads TGG.

The protein belongs to the glycosyltransferase 28 family. MurG subfamily.

Its subcellular location is the cell inner membrane. It catalyses the reaction di-trans,octa-cis-undecaprenyl diphospho-N-acetyl-alpha-D-muramoyl-L-alanyl-D-glutamyl-meso-2,6-diaminopimeloyl-D-alanyl-D-alanine + UDP-N-acetyl-alpha-D-glucosamine = di-trans,octa-cis-undecaprenyl diphospho-[N-acetyl-alpha-D-glucosaminyl-(1-&gt;4)]-N-acetyl-alpha-D-muramoyl-L-alanyl-D-glutamyl-meso-2,6-diaminopimeloyl-D-alanyl-D-alanine + UDP + H(+). It functions in the pathway cell wall biogenesis; peptidoglycan biosynthesis. Functionally, cell wall formation. Catalyzes the transfer of a GlcNAc subunit on undecaprenyl-pyrophosphoryl-MurNAc-pentapeptide (lipid intermediate I) to form undecaprenyl-pyrophosphoryl-MurNAc-(pentapeptide)GlcNAc (lipid intermediate II). This chain is UDP-N-acetylglucosamine--N-acetylmuramyl-(pentapeptide) pyrophosphoryl-undecaprenol N-acetylglucosamine transferase, found in Synechococcus sp. (strain JA-3-3Ab) (Cyanobacteria bacterium Yellowstone A-Prime).